We begin with the raw amino-acid sequence, 134 residues long: Small ribosomal subunit protein uS11 (134 aa).

2 disordered regions span residues 1 to 24 and 115 to 134; these read MPPKSRAGAVKKVRRKEKKNVAHG and IQDVTPQPHNGCRPPKRRRV. Residues 9 to 18 are compositionally biased toward basic residues; sequence AVKKVRRKEK.

Belongs to the universal ribosomal protein uS11 family. Part of the 30S ribosomal subunit. Interacts with proteins S7 and S18. Binds to IF-3.

Located on the platform of the 30S subunit, it bridges several disparate RNA helices of the 16S rRNA. Forms part of the Shine-Dalgarno cleft in the 70S ribosome. The protein is Small ribosomal subunit protein uS11 of Saccharopolyspora erythraea (strain ATCC 11635 / DSM 40517 / JCM 4748 / NBRC 13426 / NCIMB 8594 / NRRL 2338).